The chain runs to 417 residues: Histidinol-phosphate aminotransferase 1, chloroplastic (417 aa).

A chloroplast-targeting transit peptide spans Met1 to Cys40. At Ala41 the chain carries N-acetylalanine. Residue Lys277 is modified to N6-(pyridoxal phosphate)lysine.

It belongs to the class-II pyridoxal-phosphate-dependent aminotransferase family. Histidinol-phosphate aminotransferase subfamily. Homodimer. Pyridoxal 5'-phosphate serves as cofactor. Expressed in both vegetative and reproductive tissues.

The protein localises to the plastid. It localises to the chloroplast. It catalyses the reaction L-histidinol phosphate + 2-oxoglutarate = 3-(imidazol-4-yl)-2-oxopropyl phosphate + L-glutamate. The protein operates within amino-acid biosynthesis; L-histidine biosynthesis; L-histidine from 5-phospho-alpha-D-ribose 1-diphosphate: step 7/9. This chain is Histidinol-phosphate aminotransferase 1, chloroplastic (HISN6A), found in Arabidopsis thaliana (Mouse-ear cress).